We begin with the raw amino-acid sequence, 235 residues long: Probable 2-phosphosulfolactate phosphatase (235 aa).

This sequence belongs to the ComB family. It depends on Mg(2+) as a cofactor.

The catalysed reaction is (2R)-O-phospho-3-sulfolactate + H2O = (2R)-3-sulfolactate + phosphate. This chain is Probable 2-phosphosulfolactate phosphatase, found in Clostridium novyi (strain NT).